A 511-amino-acid chain; its full sequence is 2-isopropylmalate synthase (511 aa).

The region spanning 6-269 (IIIFDTTLRD…YTDIKCENIF (264 aa)) is the Pyruvate carboxyltransferase domain. Mn(2+) is bound by residues Asp-15, His-203, His-205, and Asn-239. Residues 394–511 (ILEKLSVISG…SLKVEERKMA (118 aa)) form a regulatory domain region.

The protein belongs to the alpha-IPM synthase/homocitrate synthase family. LeuA type 1 subfamily. Homodimer. The cofactor is Mn(2+).

It localises to the cytoplasm. It carries out the reaction 3-methyl-2-oxobutanoate + acetyl-CoA + H2O = (2S)-2-isopropylmalate + CoA + H(+). It functions in the pathway amino-acid biosynthesis; L-leucine biosynthesis; L-leucine from 3-methyl-2-oxobutanoate: step 1/4. Functionally, catalyzes the condensation of the acetyl group of acetyl-CoA with 3-methyl-2-oxobutanoate (2-ketoisovalerate) to form 3-carboxy-3-hydroxy-4-methylpentanoate (2-isopropylmalate). The chain is 2-isopropylmalate synthase from Campylobacter jejuni subsp. jejuni serotype O:6 (strain 81116 / NCTC 11828).